The following is a 421-amino-acid chain: D-amino acid dehydrogenase (421 aa).

Residue 3 to 17 (VLILGSGVIGVTSAY) participates in FAD binding.

The protein belongs to the DadA oxidoreductase family. FAD is required as a cofactor.

The catalysed reaction is a D-alpha-amino acid + A + H2O = a 2-oxocarboxylate + AH2 + NH4(+). In terms of biological role, oxidative deamination of D-amino acids. The protein is D-amino acid dehydrogenase of Bradyrhizobium diazoefficiens (strain JCM 10833 / BCRC 13528 / IAM 13628 / NBRC 14792 / USDA 110).